Reading from the N-terminus, the 528-residue chain is Exodeoxyribonuclease 7 large subunit (528 aa).

Residues 486–528 (QGDRDAVIDGESSGVLPPSAAPAPTRPTPRPKPASSSDQGSLF) are disordered. The span at 504–517 (SAAPAPTRPTPRPK) shows a compositional bias: pro residues.

Belongs to the XseA family. Heterooligomer composed of large and small subunits.

It is found in the cytoplasm. The enzyme catalyses Exonucleolytic cleavage in either 5'- to 3'- or 3'- to 5'-direction to yield nucleoside 5'-phosphates.. Its function is as follows. Bidirectionally degrades single-stranded DNA into large acid-insoluble oligonucleotides, which are then degraded further into small acid-soluble oligonucleotides. In Caulobacter sp. (strain K31), this protein is Exodeoxyribonuclease 7 large subunit.